A 202-amino-acid polypeptide reads, in one-letter code: Pyridoxal 5'-phosphate synthase subunit PdxT (202 aa).

Residue G52–S54 participates in L-glutamine binding. The active-site Nucleophile is the C84. L-glutamine-binding positions include R116 and I143 to R144. Active-site charge relay system residues include H184 and E186.

This sequence belongs to the glutaminase PdxT/SNO family. As to quaternary structure, in the presence of PdxS, forms a dodecamer of heterodimers. Only shows activity in the heterodimer.

It catalyses the reaction aldehydo-D-ribose 5-phosphate + D-glyceraldehyde 3-phosphate + L-glutamine = pyridoxal 5'-phosphate + L-glutamate + phosphate + 3 H2O + H(+). The enzyme catalyses L-glutamine + H2O = L-glutamate + NH4(+). The protein operates within cofactor biosynthesis; pyridoxal 5'-phosphate biosynthesis. In terms of biological role, catalyzes the hydrolysis of glutamine to glutamate and ammonia as part of the biosynthesis of pyridoxal 5'-phosphate. The resulting ammonia molecule is channeled to the active site of PdxS. This chain is Pyridoxal 5'-phosphate synthase subunit PdxT, found in Pyrobaculum neutrophilum (strain DSM 2338 / JCM 9278 / NBRC 100436 / V24Sta) (Thermoproteus neutrophilus).